A 674-amino-acid chain; its full sequence is Sterile alpha motif domain-containing protein 15 (674 aa).

Residues 1–18 (MAEVPEDYDSGPDEDGEL) are compositionally biased toward acidic residues. Residues 1-448 (MAEVPEDYDS…LEHREPKRGK (448 aa)) are disordered. 3 stretches are compositionally biased toward basic and acidic residues: residues 87–142 (IAKE…EEAK), 195–223 (ESLRVQHEETGLEPPEQTKQDFPSEKLGE), and 236–274 (TKPETPEETQRESTEKKRTEPPEQARLEFLEKEPRKSSE). A compositionally biased stretch (acidic residues) spans 276–290 (AGLEPPEETQPEVPE). Basic and acidic residues-rich tracts occupy residues 291 to 322 (EMQRKATEEKGTELPERTKPDFPDHKPRKSTD), 330 to 346 (EEIKLEFPEEESRKTNE), 354 to 372 (EMMKPESPEEIRKSNEKKN), and 391 to 429 (VEEKTQTKPTEKILELPDETKPRETHVEFSKEDRPEPIK). The 64-residue stretch at 545-608 (WDPEEVAEWI…SRHTQELLEI (64 aa)) folds into the SAM domain.

The chain is Sterile alpha motif domain-containing protein 15 (SAMD15) from Homo sapiens (Human).